The primary structure comprises 2005 residues: Chitin synthase 8 (2005 aa).

Residues 5–773 (DEVAKLSQLT…AFRELEDELR (769 aa)) enclose the Myosin motor domain. Residue 108 to 115 (GDTSSGKS) participates in ATP binding. N-linked (GlcNAc...) asparagine glycosylation is found at Asn164, Asn364, Asn390, and Asn546. The disordered stretch occupies residues 585–631 (QSVKPMRAPSTRRPNRGNTIKRTNTIKKADDDDSDEDAADAADASTS). Over residues 615-624 (DDDSDEDAAD) the composition is skewed to acidic residues. The interval 647 to 669 (LDLLLETLEDTKTWFTLCLRPND) is actin-binding. A run of 2 helical transmembrane segments spans residues 929–949 (KWVA…LSRF) and 965–985 (LAIN…IVVL). Asn1076 carries N-linked (GlcNAc...) asparagine glycosylation. Transmembrane regions (helical) follow at residues 1232-1252 (ILLA…LAAL), 1604-1624 (LIFT…IVFI), and 1626-1646 (LLST…IVLV). The N-linked (GlcNAc...) asparagine glycan is linked to Asn1650. The next 2 helical transmembrane spans lie at 1653–1673 (VPLT…VIFL) and 1680–1700 (MIGW…FLPL). 2 N-linked (GlcNAc...) asparagine glycosylation sites follow: Asn1770 and Asn1794. A disordered region spans residues 1796–1821 (SFGHSPSPSYGGTPSQFGAFAPGPGS). Residues 1797 to 1811 (FGHSPSPSYGGTPSQ) are compositionally biased toward polar residues. Asn1882 carries N-linked (GlcNAc...) asparagine glycosylation. The interval 1912–1950 (FATAEQQQQQQQQQQAAGLSGSGGSKSPPREAVAGGLPS) is disordered. A compositionally biased stretch (low complexity) spans 1917–1930 (QQQQQQQQQQAAGL). The 56-residue stretch at 1948–2003 (LPSDSQIKLDIRSLIAESDLTTITKKQLRAKLEQKYATSIESKKAFINSEIENVLS) folds into the DEK-C domain.

It in the N-terminal section; belongs to the TRAFAC class myosin-kinesin ATPase superfamily. Myosin family. This sequence in the C-terminal section; belongs to the chitin synthase family. Class V subfamily.

It localises to the cell membrane. The protein localises to the cytoplasmic vesicle membrane. The protein resides in the cell tip. The catalysed reaction is [(1-&gt;4)-N-acetyl-beta-D-glucosaminyl](n) + UDP-N-acetyl-alpha-D-glucosamine = [(1-&gt;4)-N-acetyl-beta-D-glucosaminyl](n+1) + UDP + H(+). In terms of biological role, polymerizes chitin, a structural polymer of the cell wall and septum, by transferring the sugar moiety of UDP-GlcNAc to the non-reducing end of the growing chitin polymer. Involved in mating tube and dikaryotic hyphae formation and required for the formation of invading hyphae during plant infection. In Mycosarcoma maydis (Corn smut fungus), this protein is Chitin synthase 8.